The following is a 53-amino-acid chain: UPF0391 membrane protein KPK_4780 (53 aa).

The next 2 helical transmembrane spans lie at 4 to 24 (WGII…GGLA) and 30 to 47 (AAKI…VSLF).

Belongs to the UPF0391 family.

It localises to the cell membrane. The chain is UPF0391 membrane protein KPK_4780 from Klebsiella pneumoniae (strain 342).